A 559-amino-acid polypeptide reads, in one-letter code: Acetolactate synthase, catabolic (559 aa).

Residues Arg159, 263-284 (FNNQAGDRLLRQADLIICIGYS), and 304-323 (DVLPAYEERNYVPDIELVGD) contribute to the FAD site. Asp447 contacts Mg(2+).

Belongs to the TPP enzyme family. In terms of assembly, homodimer.

It catalyses the reaction 2 pyruvate + H(+) = (2S)-2-acetolactate + CO2. The protein operates within polyol metabolism; (R,R)-butane-2,3-diol biosynthesis; (R,R)-butane-2,3-diol from pyruvate: step 1/3. The sequence is that of Acetolactate synthase, catabolic (budB) from Raoultella terrigena (Klebsiella terrigena).